The primary structure comprises 425 residues: Dihydroorotase (425 aa).

Residues histidine 56 and histidine 58 each contribute to the Zn(2+) site. Residues 58 to 60 (HYR) and asparagine 90 contribute to the substrate site. Zn(2+) is bound by residues aspartate 148, histidine 175, and histidine 228. Residue asparagine 274 coordinates substrate. Position 301 (aspartate 301) interacts with Zn(2+). The active site involves aspartate 301. Substrate contacts are provided by residues histidine 305 and 319-320 (FG).

It belongs to the metallo-dependent hydrolases superfamily. DHOase family. Class I DHOase subfamily. The cofactor is Zn(2+).

The catalysed reaction is (S)-dihydroorotate + H2O = N-carbamoyl-L-aspartate + H(+). It participates in pyrimidine metabolism; UMP biosynthesis via de novo pathway; (S)-dihydroorotate from bicarbonate: step 3/3. Catalyzes the reversible cyclization of carbamoyl aspartate to dihydroorotate. The protein is Dihydroorotase of Lactobacillus delbrueckii subsp. bulgaricus (strain ATCC 11842 / DSM 20081 / BCRC 10696 / JCM 1002 / NBRC 13953 / NCIMB 11778 / NCTC 12712 / WDCM 00102 / Lb 14).